We begin with the raw amino-acid sequence, 148 residues long: HTH-type transcriptional regulator Rv2324 (148 aa).

The region spanning 4-65 (LDDTDERILA…VVDRNALGWN (62 aa)) is the HTH asnC-type domain. Positions 23-42 (FAEIGHKVSLSAPAVKRRVD) form a DNA-binding region, H-T-H motif.

As to quaternary structure, homodimer. Forms oligomers.

Its activity is regulated as follows. The DNA-binding activity of Rv2324 is modulated by interaction of Rv2324 with amino acids. Aspartate is the only effector amino acid that completely abolishes DNA binding. The majority of amino acids induce a dimer-tetramer or dimer-hexamer oligomeric transition. In response to amino-acid binding, adopts an open quaternary association, which is a part of the functional requirement to bind to non-symmetrically distributed target DNA binding sites. Transcriptional regulator involved in growth, DNA replication and damage control. Plays a crucial role in regulating survival and growth of M.tuberculosis. Could function as a global regulator in both the latent/persistent and active phases of growth. Binds to its own promoter region and to promoters of multiple metabolic genes, such as serB2, lat, ald and roc operon. In vitro, interacts with intrinsically curved and non-curved DNA molecules, and with both supercoiled and linear DNA, with higher affinity for supercoiled DNA. Binds to DNA recombination, replication and repair intermediates. The protein is HTH-type transcriptional regulator Rv2324 of Mycobacterium tuberculosis (strain ATCC 25618 / H37Rv).